The sequence spans 668 residues: Probable tRNA (uracil-O(2)-)-methyltransferase (668 aa).

A disordered region spans residues 441–460 (QHTDSLHISTKSSLDKDDPP). A C3H1-type zinc finger spans residues 620–649 (LKTRLCWFYVHHPNGCPRVAKSCPYAHGAE).

The protein belongs to the TRM44 family.

It localises to the cytoplasm. The enzyme catalyses uridine(44) in tRNA(Ser) + S-adenosyl-L-methionine = 2'-O-methyluridine(44) in tRNA(Ser) + S-adenosyl-L-homocysteine + H(+). In terms of biological role, probable adenosyl-L-methionine (AdoMet)-dependent tRNA (uracil-O(2)-)-methyltransferase. The polypeptide is Probable tRNA (uracil-O(2)-)-methyltransferase (trmt44) (Xenopus laevis (African clawed frog)).